Here is a 601-residue protein sequence, read N- to C-terminus: Proteasome-associated ATPase (601 aa).

Residues 1–15 (MSGPRSGSGSGGSTG) show a composition bias toward gly residues. The disordered stretch occupies residues 1 to 31 (MSGPRSGSGSGGSTGRPGDAESRRSAYEKEA). Positions 18–31 (GDAESRRSAYEKEA) are enriched in basic and acidic residues. The stretch at 18–106 (GDAESRRSAY…LKEEVDRLAQ (89 aa)) forms a coiled coil. 289 to 294 (GCGKTL) contributes to the ATP binding site. The docks into pockets in the proteasome alpha-ring stretch occupies residues 600 to 601 (YL).

The protein belongs to the AAA ATPase family. Homohexamer. Assembles into a hexameric ring structure that caps the 20S proteasome core. Strongly interacts with the prokaryotic ubiquitin-like protein Pup through a hydrophobic interface; the interacting region of ARC lies in its N-terminal coiled-coil domain. There is one Pup binding site per ARC hexamer ring. Upon ATP-binding, the C-terminus of ARC interacts with the alpha-rings of the proteasome core, possibly by binding to the intersubunit pockets.

It participates in protein degradation; proteasomal Pup-dependent pathway. Its function is as follows. ATPase which is responsible for recognizing, binding, unfolding and translocation of pupylated proteins into the bacterial 20S proteasome core particle. May be essential for opening the gate of the 20S proteasome via an interaction with its C-terminus, thereby allowing substrate entry and access to the site of proteolysis. Thus, the C-termini of the proteasomal ATPase may function like a 'key in a lock' to induce gate opening and therefore regulate proteolysis. In Frankia alni (strain DSM 45986 / CECT 9034 / ACN14a), this protein is Proteasome-associated ATPase.